The sequence spans 306 residues: tRNA dimethylallyltransferase (306 aa).

ATP is bound at residue 9–16 (GPTAIGKT). 11–16 (TAIGKT) is a binding site for substrate. Positions 34–37 (DSMQ) are interaction with substrate tRNA.

The protein belongs to the IPP transferase family. In terms of assembly, monomer. Mg(2+) serves as cofactor.

The enzyme catalyses adenosine(37) in tRNA + dimethylallyl diphosphate = N(6)-dimethylallyladenosine(37) in tRNA + diphosphate. Its function is as follows. Catalyzes the transfer of a dimethylallyl group onto the adenine at position 37 in tRNAs that read codons beginning with uridine, leading to the formation of N6-(dimethylallyl)adenosine (i(6)A). In Lactobacillus acidophilus (strain ATCC 700396 / NCK56 / N2 / NCFM), this protein is tRNA dimethylallyltransferase.